A 465-amino-acid chain; its full sequence is Putative multidrug resistance protein MdtD (465 aa).

A run of 12 helical transmembrane segments spans residues 12 to 32 (LWIV…VNTA), 49 to 69 (SVIV…GWLA), 72 to 92 (IGVK…SLMC), 138 to 158 (FVTL…GFLV), 165 to 185 (WIFL…LLLM), 195 to 215 (FDIS…LALD), 219 to 239 (GLGL…IALG), 267 to 287 (LVGS…TPIF), 290 to 310 (IGLG…IIGS), 329 to 351 (VLVN…AIMG), 393 to 413 (LLSM…GILL), and 430 to 450 (SAFL…ALIF).

It belongs to the major facilitator superfamily. TCR/Tet family.

The protein localises to the cell inner membrane. This is Putative multidrug resistance protein MdtD from Yersinia pseudotuberculosis serotype I (strain IP32953).